The sequence spans 1106 residues: Protein shuttle craft (1106 aa).

Disordered stretches follow at residues 7–26 (QLTN…AMAD) and 189–371 (PAAA…KLSQ). Over residues 189 to 201 (PAAATTNGNSTAS) the composition is skewed to low complexity. 2 stretches are compositionally biased toward basic and acidic residues: residues 232–270 (NYER…RDSR) and 278–323 (RRSD…RDRI). T335 bears the Phosphothreonine mark. 4 positions are modified to phosphoserine: S336, S339, S343, and S354. The span at 336–354 (SNESAHPSPEKQSQLQQIS) shows a compositional bias: polar residues. The RING-type; atypical zinc-finger motif lies at 386–433 (CLVCVEAIKSHQPTWSCRNCYHMLHLKCTITWASSSKSEVGWRCPACQ). 8 consecutive NF-X1-type zinc fingers follow at residues 474–492 (CSHA…PCQA), 527–546 (CGEH…ACSE), 585–604 (CGHH…PCKL), 644–667 (CGKP…PCPK), 706–725 (CGKH…DCPL), 733–752 (CGKH…PCYR), 844–867 (CGGH…ICRQ), and 876–896 (CGHK…PCKE). Residues 1006–1071 (TKSVYETLTD…NRNVVATAHK (66 aa)) form the R3H domain.

Belongs to the NFX1 family. Ovaries and embryonic central nervous system.

It is found in the nucleus. In terms of biological role, plays an essential role during the late stages of embryonic neurogenesis. May either fine-tune the guidance or the spatial maintenance of the migrating SNB and in nerve roots, which are composed of axons originating from distinct groups of motor neurons and may be required to either guide or maintain the position of these nerves along a direct and straight path to their ultimate targets in particular muscle fields. May play a role in egg chamber development and/or may confer essential maternal contributions to the early embryo. The sequence is that of Protein shuttle craft (stc) from Drosophila melanogaster (Fruit fly).